The chain runs to 265 residues: MAPERWDDEEDSVSPPPVAPRRRFDDEEEDEVLDSWDAAEDSEVEREKAAKAAEAKAKADAEAAAKKKSKSQRIQEHKEERKKKAEEEDSDSEEEDDADKRARLRRAQKDADLKHAEDLFGDIDLNRNRGAPKAIVISDSADPTQAVDLSAMPLFKPTTKEQFARLTSTLIPLLTPHSKKPHYSLWAQEFAKQLVKELNSADVKKIASAMTTMSNEKMREERAADKGSKKSKAAKTKVSLVTSRDNKLDADYDNGDDGLGDDDFM.

2 stretches are compositionally biased toward acidic residues: residues 1 to 12 (MAPERWDDEEDS) and 26 to 44 (DEEE…DSEV). Disordered stretches follow at residues 1-113 (MAPE…DADL) and 212-265 (TMSN…DDFM). 2 stretches are compositionally biased toward basic and acidic residues: residues 45-65 (EREK…EAAA) and 73-86 (RIQE…KKAE). Residues 61-95 (AEAAAKKKSKSQRIQEHKEERKKKAEEEDSDSEEE) adopt a coiled-coil conformation. Residues 87–97 (EEDSDSEEEDD) show a composition bias toward acidic residues. Basic and acidic residues predominate over residues 216–228 (EKMREERAADKGS). A compositionally biased stretch (acidic residues) spans 251–265 (DYDNGDDGLGDDDFM).

Belongs to the eIF-3 subunit J family. In terms of assembly, component of the eukaryotic translation initiation factor 3 (eIF-3) complex.

Its subcellular location is the cytoplasm. Its function is as follows. Component of the eukaryotic translation initiation factor 3 (eIF-3) complex, which is involved in protein synthesis of a specialized repertoire of mRNAs and, together with other initiation factors, stimulates binding of mRNA and methionyl-tRNAi to the 40S ribosome. The eIF-3 complex specifically targets and initiates translation of a subset of mRNAs involved in cell proliferation. In Aspergillus oryzae (strain ATCC 42149 / RIB 40) (Yellow koji mold), this protein is Eukaryotic translation initiation factor 3 subunit J (hcr1).